We begin with the raw amino-acid sequence, 358 residues long: Chorismate synthase (358 aa).

Arg-46 contacts NADP(+). Residues 123–125 (RSS), 235–236 (NA), Gly-275, 290–294 (KPTPS), and Arg-316 contribute to the FMN site.

It belongs to the chorismate synthase family. As to quaternary structure, homotetramer. FMNH2 serves as cofactor.

It carries out the reaction 5-O-(1-carboxyvinyl)-3-phosphoshikimate = chorismate + phosphate. It participates in metabolic intermediate biosynthesis; chorismate biosynthesis; chorismate from D-erythrose 4-phosphate and phosphoenolpyruvate: step 7/7. In terms of biological role, catalyzes the anti-1,4-elimination of the C-3 phosphate and the C-6 proR hydrogen from 5-enolpyruvylshikimate-3-phosphate (EPSP) to yield chorismate, which is the branch point compound that serves as the starting substrate for the three terminal pathways of aromatic amino acid biosynthesis. This reaction introduces a second double bond into the aromatic ring system. This is Chorismate synthase from Sulfurimonas denitrificans (strain ATCC 33889 / DSM 1251) (Thiomicrospira denitrificans (strain ATCC 33889 / DSM 1251)).